The primary structure comprises 90 residues: Small ribosomal subunit protein uS15 (90 aa).

Belongs to the universal ribosomal protein uS15 family. As to quaternary structure, part of the 30S ribosomal subunit. Forms a bridge to the 50S subunit in the 70S ribosome, contacting the 23S rRNA.

Functionally, one of the primary rRNA binding proteins, it binds directly to 16S rRNA where it helps nucleate assembly of the platform of the 30S subunit by binding and bridging several RNA helices of the 16S rRNA. Forms an intersubunit bridge (bridge B4) with the 23S rRNA of the 50S subunit in the ribosome. In Wolbachia pipientis wMel, this protein is Small ribosomal subunit protein uS15.